Reading from the N-terminus, the 402-residue chain is Septin CDC11 (402 aa).

Position 1 is an N-acetylmethionine (Met1). Position 4 is a phosphoserine (Ser4). Positions 14–21 match the Basic motif motif; it reads RKRKTLKK. The Septin-type G domain occupies 21-307; sequence KSINFSIMII…ENYRTEALSG (287 aa). A G1 motif region spans residues 31–38; the sequence is GESGSGRS. Residue 31 to 38 coordinates GTP; sequence GESGSGRS. A G3 motif region spans residues 89-92; it reads DTPN. The tract at residues 171-174 is G4 motif; that stretch reads SKAD. GTP-binding positions include 172-180 and Gly233; that span reads KADSLTPKE. The stretch at 318 to 376 forms a coiled coil; it reads AKQEISESDYLMKEEQIKLEEERLRKFEERVHQDLINKRKELLERENELKEIEKRLLAE. Phosphoserine; by CDC28 is present on Ser394. At Ser395 the chain carries Phosphoserine; by GIN4.

It belongs to the TRAFAC class TrmE-Era-EngA-EngB-Septin-like GTPase superfamily. Septin GTPase family. As to quaternary structure, component of the septin complex which consists of CDC3, CDC10, CDC11, CDC12 and probably SEP7. The purified septin complex appeared to have a stoichiometry of 2 CDC3, 1 to 2 CDC10, 1 CDC11, 2 CDC12, and 1 or none SEP7 subunit. Interacts with HSL1. In terms of processing, hyphal induction causes immediate phosphorylation at Ser-395 by GIN4 and at Ser-394 by CDC28-CCN1. GIN4 phosphorylation at Ser-395 primes CDC11 for further phosphorylation by CDC28-CCN1. CDC28-HGC1 then maintains CDC11 phosphorylation throughout hyphal growth. Ser-4 is also phosphorylated in yeast cells but not hyphal cells. Met-1 is acetylated.

It is found in the bud neck. Functionally, septins are GTPases involved in cytokinesis that assemble early in the cell cycle as a patch at the incipient bud site and form a ring before bud emergence, which transforms into an hour-glass shaped collar of cortical filaments that spans both sides of the mother-bud neck. This collar persists until just before cytokinesis, when it splits into two rings that occupy opposite sides of the neck. The septins at the bud neck serve as a structural scaffold that recruits different components involved in diverse processes at specific stages during the cell cycle. Many proteins bind asymmetrically to the septin collar. The septin assembly is regulated by protein kinase GIN4. Septins are also involved in cell morphogenesis, chlamydospores morphogenesis, bud site selection, chitin deposition, cell cycle regulation, cell compartmentalization, and spore wall formation. CDC11 is required for the correct localization of SEC3 at bud tips and bud necks. Plays a key role in invasive growth and virulence. The protein is Septin CDC11 (CDC11) of Candida albicans (strain SC5314 / ATCC MYA-2876) (Yeast).